The chain runs to 399 residues: Alpha-tubulin N-acetyltransferase (399 aa).

Positions M1–F178 constitute an N-acetyltransferase domain. Acetyl-CoA-binding positions include F112–K125 and S148–K157. Polar residues predominate over residues S183 to R193. The segment at S183–Y223 is disordered. The segment covering S194–Y223 has biased composition (low complexity).

This sequence belongs to the acetyltransferase ATAT1 family.

The enzyme catalyses L-lysyl-[alpha-tubulin] + acetyl-CoA = N(6)-acetyl-L-lysyl-[alpha-tubulin] + CoA + H(+). Specifically acetylates 'Lys-40' in alpha-tubulin on the lumenal side of microtubules. Promotes microtubule destabilization and accelerates microtubule dynamics; this activity may be independent of acetylation activity. Acetylates alpha-tubulin with a slow enzymatic rate, due to a catalytic site that is not optimized for acetyl transfer. Enters the microtubule through each end and diffuses quickly throughout the lumen of microtubules. Acetylates only long/old microtubules because of its slow acetylation rate since it does not have time to act on dynamically unstable microtubules before the enzyme is released. This Tetrahymena thermophila (strain SB210) protein is Alpha-tubulin N-acetyltransferase.